The following is a 106-amino-acid chain: Ribulose bisphosphate carboxylase small subunit (106 aa).

It belongs to the RuBisCO small chain family. Heterohexadecamer of 8 large and 8 small subunits.

The protein localises to the plastid. It is found in the cyanelle. Functionally, ruBisCO catalyzes two reactions: the carboxylation of D-ribulose 1,5-bisphosphate, the primary event in carbon dioxide fixation, as well as the oxidative fragmentation of the pentose substrate. Both reactions occur simultaneously and in competition at the same active site. Although the small subunit is not catalytic it is essential for maximal activity. The protein is Ribulose bisphosphate carboxylase small subunit of Cyanophora paradoxa.